We begin with the raw amino-acid sequence, 123 residues long: Guanine nucleotide exchange factor MSS4 (123 aa).

N-acetylmethionine is present on methionine 1. Positions 9–123 (ELVSAEGRNR…YVALERVSHE (115 aa)) constitute an MSS4 domain. Residues cysteine 23, cysteine 26, cysteine 94, and cysteine 97 each contribute to the Zn(2+) site.

Belongs to the DSS4/MSS4 family. As to quaternary structure, interacts with RAB8A. Ubiquitous.

Its function is as follows. Guanine-nucleotide-releasing protein that acts on members of the SEC4/YPT1/RAB subfamily. Stimulates GDP release from both YPT1, RAB3A and RAB10, but is less active on these proteins than on the SEC4 protein. Might play a general role in vesicular transport. This Homo sapiens (Human) protein is Guanine nucleotide exchange factor MSS4 (RABIF).